A 426-amino-acid polypeptide reads, in one-letter code: Proline--tRNA ligase (426 aa).

This sequence belongs to the class-II aminoacyl-tRNA synthetase family. ProS type 2 subfamily. As to quaternary structure, homodimer.

It is found in the cytoplasm. It catalyses the reaction tRNA(Pro) + L-proline + ATP = L-prolyl-tRNA(Pro) + AMP + diphosphate. Catalyzes the attachment of proline to tRNA(Pro) in a two-step reaction: proline is first activated by ATP to form Pro-AMP and then transferred to the acceptor end of tRNA(Pro). This chain is Proline--tRNA ligase, found in Rickettsia rickettsii (strain Iowa).